Consider the following 548-residue polypeptide: MDMGGLDNLIANTAYLQARKTDSDSRELQRRRRSLALPGPQGCAELRQSLSPHFHSLCEQQPIGRRLFRDFLATVPKYSQAVAFLEDVQNWELAEEGPAKTSTLQQLAATCARDPGPQSFLSQDLATKCRAASTDEERKTLVEQAKAETMSFLQEQPFQDFLASPFYDRFLQWKLFEMQPVSDKYFTEFRVLGKGGFGEVCAVQVRNTGKMYACKKLDKKRLKKKGGEKMALLEKEILEKVNSPFIVSLAYAFESKTHLCLVMSLMNGGDLKFHIYNVGTRGLAMSRVIFYTAQMTCGVLHLHGLGIVYRDLKPENVLLDDLGNCRLSDLGLAVEVQDDKPITQRAGTNGYMAPEILMDKASYSYPVDWFAMGCSIYEMVAGRTPFKDFKEKVSKEDLKERTMKDEVAFHHENFTEETKDICRLFLAKKPEQRLGSREKADDPRKHPFFQTVNFPRLEAGLVEPPFVPDPSVVYAKDVDEIDDFSEVRGVEFDDKDKQFFQRFSTGAVPVAWQEEIIETGLFEELNDPNRPSGDGKGDSSKSGVCLLL.

S34 is modified (phosphoserine; by PKA). The region spanning 54-171 (FHSLCEQQPI…LASPFYDRFL (118 aa)) is the RGS domain. A Protein kinase domain is found at 186-449 (FTEFRVLGKG…ADDPRKHPFF (264 aa)). ATP is bound by residues 192 to 200 (LGKGGFGEV) and K215. Residue D311 is the Proton acceptor of the active site. An AGC-kinase C-terminal domain is found at 450–515 (QTVNFPRLEA…GAVPVAWQEE (66 aa)). A disordered region spans residues 523–548 (EELNDPNRPSGDGKGDSSKSGVCLLL). C545 carries the post-translational modification Cysteine methyl ester. C545 carries S-geranylgeranyl cysteine lipidation. Positions 546-548 (LLL) are cleaved as a propeptide — removed in mature form.

This sequence belongs to the protein kinase superfamily. AGC Ser/Thr protein kinase family. GPRK subfamily. Interacts (when prenylated) with PDE6D; this promotes release from membranes. Post-translationally, autophosphorylated. Phosphorylation at Ser-34 is regulated by light and activated by cAMP. As to expression, retina. Cones and rod.

It is found in the membrane. The catalysed reaction is L-threonyl-[rhodopsin] + ATP = O-phospho-L-threonyl-[rhodopsin] + ADP + H(+). It carries out the reaction L-seryl-[rhodopsin] + ATP = O-phospho-L-seryl-[rhodopsin] + ADP + H(+). Inhibited by phosphorylation of Ser-34. In terms of biological role, retina-specific kinase involved in the shutoff of the photoresponse and adaptation to changing light conditions via cone opsin phosphorylation, including rhodopsin (RHO). This is Rhodopsin kinase GRK7 (GRK7) from Ictidomys tridecemlineatus (Thirteen-lined ground squirrel).